Consider the following 159-residue polypeptide: Cyclic pyranopterin monophosphate synthase (159 aa).

Residues 76–78 (MCH) and 114–115 (ME) each bind substrate. Aspartate 129 is an active-site residue.

Belongs to the MoaC family. Homohexamer; trimer of dimers.

The enzyme catalyses (8S)-3',8-cyclo-7,8-dihydroguanosine 5'-triphosphate = cyclic pyranopterin phosphate + diphosphate. It participates in cofactor biosynthesis; molybdopterin biosynthesis. In terms of biological role, catalyzes the conversion of (8S)-3',8-cyclo-7,8-dihydroguanosine 5'-triphosphate to cyclic pyranopterin monophosphate (cPMP). This is Cyclic pyranopterin monophosphate synthase from Natranaerobius thermophilus (strain ATCC BAA-1301 / DSM 18059 / JW/NM-WN-LF).